The following is a 381-amino-acid chain: Creatine kinase M-type (381 aa).

A Phosphagen kinase N-terminal domain is found at 11–98; the sequence is KLNYSAAEEF…FDPVIEDRHG (88 aa). One can recognise a Phosphagen kinase C-terminal domain in the interval 125–367; it reads YVLSSRVRTG…KLMVEMEKRL (243 aa). Residues 128-132, His-191, Arg-236, Arg-292, 320-325, and Asp-335 contribute to the ATP site; these read SSRVR and RGTGGV.

This sequence belongs to the ATP:guanido phosphotransferase family. As to quaternary structure, dimer of identical or non-identical chains. With MM being the major form in skeletal muscle and myocardium, MB existing in myocardium, and BB existing in many tissues, especially brain.

It localises to the cytoplasm. It carries out the reaction creatine + ATP = N-phosphocreatine + ADP + H(+). Its function is as follows. Reversibly catalyzes the transfer of phosphate between ATP and various phosphogens (e.g. creatine phosphate). Creatine kinase isoenzymes play a central role in energy transduction in tissues with large, fluctuating energy demands, such as skeletal muscle, heart, brain and spermatozoa. This chain is Creatine kinase M-type, found in Torpedo marmorata (Marbled electric ray).